A 227-amino-acid polypeptide reads, in one-letter code: Cytochrome c oxidase subunit 2 (227 aa).

Residues 1–14 (MAYPLQLGFQDATS) lie on the Mitochondrial intermembrane side of the membrane. A helical transmembrane segment spans residues 15–45 (PVMEELLHFHDHTLMIIFLISSLVLYIIMLM). Residues 46–59 (LTTKLVHTNMMNVQ) are Mitochondrial matrix-facing. The helical transmembrane segment at 60–87 (EMEMIWTILPAIILILIALPSLHTLYMM) threads the bilayer. Over 88–227 (DEINNPLLTI…YFESWSASLA (140 aa)) the chain is Mitochondrial intermembrane. Cu cation is bound by residues H161, C196, E198, C200, H204, and M207. E198 contributes to the Mg(2+) binding site. Y218 carries the phosphotyrosine modification.

Belongs to the cytochrome c oxidase subunit 2 family. As to quaternary structure, component of the cytochrome c oxidase (complex IV, CIV), a multisubunit enzyme composed of 14 subunits. The complex is composed of a catalytic core of 3 subunits MT-CO1, MT-CO2 and MT-CO3, encoded in the mitochondrial DNA, and 11 supernumerary subunits COX4I, COX5A, COX5B, COX6A, COX6B, COX6C, COX7A, COX7B, COX7C, COX8 and NDUFA4, which are encoded in the nuclear genome. The complex exists as a monomer or a dimer and forms supercomplexes (SCs) in the inner mitochondrial membrane with NADH-ubiquinone oxidoreductase (complex I, CI) and ubiquinol-cytochrome c oxidoreductase (cytochrome b-c1 complex, complex III, CIII), resulting in different assemblies (supercomplex SCI(1)III(2)IV(1) and megacomplex MCI(2)III(2)IV(2)). Found in a complex with TMEM177, COA6, COX18, COX20, SCO1 and SCO2. Interacts with TMEM177 in a COX20-dependent manner. Interacts with COX20. Interacts with COX16. Requires Cu cation as cofactor.

It is found in the mitochondrion inner membrane. The catalysed reaction is 4 Fe(II)-[cytochrome c] + O2 + 8 H(+)(in) = 4 Fe(III)-[cytochrome c] + 2 H2O + 4 H(+)(out). In terms of biological role, component of the cytochrome c oxidase, the last enzyme in the mitochondrial electron transport chain which drives oxidative phosphorylation. The respiratory chain contains 3 multisubunit complexes succinate dehydrogenase (complex II, CII), ubiquinol-cytochrome c oxidoreductase (cytochrome b-c1 complex, complex III, CIII) and cytochrome c oxidase (complex IV, CIV), that cooperate to transfer electrons derived from NADH and succinate to molecular oxygen, creating an electrochemical gradient over the inner membrane that drives transmembrane transport and the ATP synthase. Cytochrome c oxidase is the component of the respiratory chain that catalyzes the reduction of oxygen to water. Electrons originating from reduced cytochrome c in the intermembrane space (IMS) are transferred via the dinuclear copper A center (CU(A)) of subunit 2 and heme A of subunit 1 to the active site in subunit 1, a binuclear center (BNC) formed by heme A3 and copper B (CU(B)). The BNC reduces molecular oxygen to 2 water molecules using 4 electrons from cytochrome c in the IMS and 4 protons from the mitochondrial matrix. The protein is Cytochrome c oxidase subunit 2 (MT-CO2) of Mammuthus primigenius (Siberian woolly mammoth).